Reading from the N-terminus, the 55-residue chain is Large ribosomal subunit protein bL32 (55 aa).

The protein belongs to the bacterial ribosomal protein bL32 family.

The polypeptide is Large ribosomal subunit protein bL32 (Aeromonas hydrophila subsp. hydrophila (strain ATCC 7966 / DSM 30187 / BCRC 13018 / CCUG 14551 / JCM 1027 / KCTC 2358 / NCIMB 9240 / NCTC 8049)).